The primary structure comprises 971 residues: MASNNVAQFAAELKMPAGVLLEQLQAAGVQKASEDDALSEADKARLLDHLRKSHGATDGDKRKITLTRKHTSEIKQSDATGKARTIQVEVRKKRTFVKRDDVSEGAEQGQAQVAEADDDAELKRREEEARREAELLEKQAQELRERQERLEREEAERRAREEAAEAERRRAEEEAAAKRAAAEAAAAQQAAAQQAAAEQETAPTQSAQDEARAAAERAAQREAAKKAEDAAREAADKARAEQEEISKRRAAAEAEARAIREMMNTPRKAVVKAAEPPKPAEPAKPAEAKGTLHKPAKPEGAQARPAVKKPAGAAAPATTQAPAGAGDRNKKPGAGKGGWQDDASKRRGIKTRGDSSGGVDRGWRGGPKGRGRHQDSASSFQAPTEPIVREVHVPETVSVADLAHKMSIKASEVIKVMMKMGQMVTINQVLDQETAMIIVEELGHRAVAAKLDDPEALLVEGETGTDAEQLPRPPVVTVMGHVDHGKTSLLDHIRRAKVAAGEAGGITQHIGAYHVDTPRGVITFLDTPGHEAFTAMRARGAKATDIVVLVVAADDGVMPQTKEAIAHAKAGGVPIVVAINKIDKPEANPDRVKQELVAEGVVPEEYGGDSPFVPVSAKTGAGIDDLLENVLLQAEVLELKAPVEAPAKGIVIEAKLDKGKGPVATILVQSGTLNRGDIVLAGTAYGRVRAMLDENGKPTKEAGPSIPVEIQGLSEVPGAGEEVIVLPDERKAREIALFRQGKFRDVKLAKQQAAKLESMLEQMGEGEVQNLPLIIKADVQGSQEALVQSLLKLSTDEVRVQIVHSAVGGISENDVNLATASKAVIIGFNTRADAQARKLAEANGIDIRYYNIIYDAVDEVKAAMSGMLAPEKREVITGMVEVRQVFKVPKVGTVAGCMVTDGIVKRSSSVRVLRNNVVIFTGELESLKRFKDDVKEVKQGFECGMSVKNFNDIIEGDQFEVFEVTEVARTL.

The segment covering H49–K63 has biased composition (basic and acidic residues). 2 disordered regions span residues H49–T85 and R99–P386. Residues G105–A114 show a composition bias toward low complexity. A compositionally biased stretch (basic and acidic residues) spans E121–A181. Over residues A182 to E200 the composition is skewed to low complexity. A compositionally biased stretch (basic and acidic residues) spans D209–R260. Over residues A303–A325 the composition is skewed to low complexity. The span at S355 to K368 shows a compositional bias: gly residues. The tr-type G domain occupies P471–K640. The interval G480–T487 is G1. A GTP-binding site is contributed by G480–T487. The tract at residues G505–H509 is G2. A G3 region spans residues D526–G529. GTP contacts are provided by residues D526–H530 and N580–D583. The segment at N580–D583 is G4. The G5 stretch occupies residues S616–K618.

This sequence belongs to the TRAFAC class translation factor GTPase superfamily. Classic translation factor GTPase family. IF-2 subfamily.

The protein resides in the cytoplasm. In terms of biological role, one of the essential components for the initiation of protein synthesis. Protects formylmethionyl-tRNA from spontaneous hydrolysis and promotes its binding to the 30S ribosomal subunits. Also involved in the hydrolysis of GTP during the formation of the 70S ribosomal complex. In Burkholderia cenocepacia (strain ATCC BAA-245 / DSM 16553 / LMG 16656 / NCTC 13227 / J2315 / CF5610) (Burkholderia cepacia (strain J2315)), this protein is Translation initiation factor IF-2.